Here is a 453-residue protein sequence, read N- to C-terminus: Ribose 1,5-bisphosphate phosphokinase PhnN (453 aa).

The interval 1–21 (MHGSTGFVQGTRPAGDQADPL) is disordered. Residues 1-271 (MHGSTGFVQG…SGQGERASLP (271 aa)) form a unknown region. The interval 272 to 453 (HSGRIFFCVG…KLLDILRQAK (182 aa)) is ribose 1,5-bisphosphokinase.

It in the C-terminal section; belongs to the ribose 1,5-bisphosphokinase family.

The catalysed reaction is alpha-D-ribose 1,5-bisphosphate + ATP = 5-phospho-alpha-D-ribose 1-diphosphate + ADP. It functions in the pathway metabolic intermediate biosynthesis; 5-phospho-alpha-D-ribose 1-diphosphate biosynthesis; 5-phospho-alpha-D-ribose 1-diphosphate from D-ribose 5-phosphate (route II): step 3/3. In terms of biological role, catalyzes the phosphorylation of ribose 1,5-bisphosphate to 5-phospho-D-ribosyl alpha-1-diphosphate (PRPP). This chain is Ribose 1,5-bisphosphate phosphokinase PhnN (phnN), found in Janthinobacterium sp. (strain Marseille) (Minibacterium massiliensis).